Here is a 556-residue protein sequence, read N- to C-terminus: Hydroxylamine reductase (556 aa).

4 residues coordinate [4Fe-4S] cluster: C5, C8, C17, and C23. H249, E273, C317, C409, C437, C462, E497, and K499 together coordinate hybrid [4Fe-2O-2S] cluster. The residue at position 409 (C409) is a Cysteine persulfide.

The protein belongs to the HCP family. [4Fe-4S] cluster serves as cofactor. Hybrid [4Fe-2O-2S] cluster is required as a cofactor.

The protein resides in the cytoplasm. It carries out the reaction A + NH4(+) + H2O = hydroxylamine + AH2 + H(+). Its function is as follows. Catalyzes the reduction of hydroxylamine to form NH(3) and H(2)O. This chain is Hydroxylamine reductase, found in Kosmotoga olearia (strain ATCC BAA-1733 / DSM 21960 / TBF 19.5.1).